Consider the following 498-residue polypeptide: ATP synthase subunit beta, chloroplastic (498 aa).

172-179 contacts ATP; sequence GGAGVGKT.

It belongs to the ATPase alpha/beta chains family. F-type ATPases have 2 components, CF(1) - the catalytic core - and CF(0) - the membrane proton channel. CF(1) has five subunits: alpha(3), beta(3), gamma(1), delta(1), epsilon(1). CF(0) has four main subunits: a(1), b(1), b'(1) and c(9-12).

It localises to the plastid. The protein resides in the chloroplast thylakoid membrane. It catalyses the reaction ATP + H2O + 4 H(+)(in) = ADP + phosphate + 5 H(+)(out). In terms of biological role, produces ATP from ADP in the presence of a proton gradient across the membrane. The catalytic sites are hosted primarily by the beta subunits. The polypeptide is ATP synthase subunit beta, chloroplastic (Illicium oligandrum (Star anise)).